A 169-amino-acid chain; its full sequence is Peptide deformylase (169 aa).

2 residues coordinate Fe cation: cysteine 91 and histidine 133. Residue glutamate 134 is part of the active site. Histidine 137 contributes to the Fe cation binding site.

Belongs to the polypeptide deformylase family. Fe(2+) serves as cofactor.

The enzyme catalyses N-terminal N-formyl-L-methionyl-[peptide] + H2O = N-terminal L-methionyl-[peptide] + formate. Its function is as follows. Removes the formyl group from the N-terminal Met of newly synthesized proteins. Requires at least a dipeptide for an efficient rate of reaction. N-terminal L-methionine is a prerequisite for activity but the enzyme has broad specificity at other positions. This chain is Peptide deformylase, found in Salmonella typhi.